We begin with the raw amino-acid sequence, 684 residues long: Translation factor GUF1 homolog, mitochondrial (684 aa).

The tr-type G domain occupies 82–270 (HLIRNFSIIA…AVIERIPQPK (189 aa)). GTP contacts are provided by residues 91-98 (AHVDHGKS), 163-167 (DTPGH), and 217-220 (NKID).

This sequence belongs to the TRAFAC class translation factor GTPase superfamily. Classic translation factor GTPase family. LepA subfamily.

It is found in the mitochondrion inner membrane. It carries out the reaction GTP + H2O = GDP + phosphate + H(+). Functionally, promotes mitochondrial protein synthesis. May act as a fidelity factor of the translation reaction, by catalyzing a one-codon backward translocation of tRNAs on improperly translocated ribosomes. Binds to mitochondrial ribosomes in a GTP-dependent manner. This chain is Translation factor GUF1 homolog, mitochondrial, found in Physcomitrium patens (Spreading-leaved earth moss).